Here is a 202-residue protein sequence, read N- to C-terminus: Cold-regulated 413 plasma membrane protein 4 (202 aa).

The Extracellular segment spans residues 1-42 (MGRGEFLAMKTEENAANLINSDMNEFVAAAKKLVKDVGMLGG). Residues 43 to 63 (VGFGTSVLQWAASIFAIYLLI) form a helical membrane-spanning segment. At 64–72 (LDRTNWKTK) the chain is on the cytoplasmic side. A helical membrane pass occupies residues 73–93 (MLTTLLVPYIFFTLPSVIFQF). The Extracellular portion of the chain corresponds to 94–97 (FSGD). A helical transmembrane segment spans residues 98-118 (FGKWIALIAIIVRLFFPKEFP). Residue E119 is a topological domain, cytoplasmic. The chain crosses the membrane as a helical span at residues 120-140 (WLEIPVALILIVVVSPSLIAW). Residues 141–145 (TLRES) are Extracellular-facing. A helical membrane pass occupies residues 146–166 (WVGAVICLVIACYLFHEHIKA). Topologically, residues 167–181 (SGGFKNSFTQKNGIS) are cytoplasmic. Residues 182–202 (NTIGIVALLVYPVWTIFFHIF) traverse the membrane as a helical segment.

Belongs to the Cold-regulated 413 protein family.

Its subcellular location is the cell membrane. In Arabidopsis thaliana (Mouse-ear cress), this protein is Cold-regulated 413 plasma membrane protein 4.